A 1232-amino-acid polypeptide reads, in one-letter code: DNA-directed RNA polymerase subunit beta (1232 aa).

The tract at residues 1170 to 1232 is disordered; sequence SVDEDADELE…LDLDDFGDEH (63 aa). The segment covering 1171–1180 has biased composition (acidic residues); it reads VDEDADELEV. A compositionally biased stretch (basic and acidic residues) spans 1189 to 1198; the sequence is PEEKEEKEKE. Residues 1199-1232 are compositionally biased toward acidic residues; that stretch reads DSDEYDDLREEDVEPDLEELSLDDLDLDDFGDEH.

The protein belongs to the RNA polymerase beta chain family. In terms of assembly, the RNAP catalytic core consists of 2 alpha, 1 beta, 1 beta' and 1 omega subunit. When a sigma factor is associated with the core the holoenzyme is formed, which can initiate transcription.

It catalyses the reaction RNA(n) + a ribonucleoside 5'-triphosphate = RNA(n+1) + diphosphate. DNA-dependent RNA polymerase catalyzes the transcription of DNA into RNA using the four ribonucleoside triphosphates as substrates. This is DNA-directed RNA polymerase subunit beta from Clostridium botulinum (strain Kyoto / Type A2).